A 375-amino-acid chain; its full sequence is CCA-adding enzyme (375 aa).

Gly8 and Arg11 together coordinate ATP. 2 residues coordinate CTP: Gly8 and Arg11. 2 residues coordinate Mg(2+): Asp21 and Asp23. Arg91, Arg137, and Arg140 together coordinate ATP. CTP contacts are provided by Arg91, Arg137, and Arg140.

Belongs to the tRNA nucleotidyltransferase/poly(A) polymerase family. Bacterial CCA-adding enzyme type 2 subfamily. Mg(2+) serves as cofactor.

It carries out the reaction a tRNA precursor + 2 CTP + ATP = a tRNA with a 3' CCA end + 3 diphosphate. The catalysed reaction is a tRNA with a 3' CCA end + 2 CTP + ATP = a tRNA with a 3' CCACCA end + 3 diphosphate. In terms of biological role, catalyzes the addition and repair of the essential 3'-terminal CCA sequence in tRNAs without using a nucleic acid template. Adds these three nucleotides in the order of C, C, and A to the tRNA nucleotide-73, using CTP and ATP as substrates and producing inorganic pyrophosphate. tRNA 3'-terminal CCA addition is required both for tRNA processing and repair. Also involved in tRNA surveillance by mediating tandem CCA addition to generate a CCACCA at the 3' terminus of unstable tRNAs. While stable tRNAs receive only 3'-terminal CCA, unstable tRNAs are marked with CCACCA and rapidly degraded. In Pseudomonas entomophila (strain L48), this protein is CCA-adding enzyme.